The sequence spans 527 residues: Cytochrome b5 reductase 4 (527 aa).

The tract at residues 1 to 24 is disordered; the sequence is MLNVPSQAFPAAGSQQRVAPAGQS. Positions 56-132 constitute a Cytochrome b5 heme-binding domain; that stretch reads LIEVTEDELK…LKECLVGRMA (77 aa). Heme contacts are provided by His91 and His114. Residues 138-171 form a disordered region; it reads ALQAHTEKTESTHLNGLSAPPSLRPEPLSAPLPA. The 92-residue stretch at 173–264 folds into the CS domain; that stretch reads DHRPRYDWFQ…SVKEKWTQLG (92 aa). In terms of domain architecture, FAD-binding FR-type spans 281–392; that stretch reads LFYRECVLLS…GGPEGSFTLR (112 aa). Residues 372–387 and 399–431 contribute to the FAD site; these read ANLP…GPEG and HLYM…KMKL.

It belongs to the flavoprotein pyridine nucleotide cytochrome reductase family. FAD serves as cofactor.

It is found in the endoplasmic reticulum. It carries out the reaction 2 Fe(III)-[cytochrome b5] + NADH = 2 Fe(II)-[cytochrome b5] + NAD(+) + H(+). Its function is as follows. NADH-cytochrome b5 reductase involved in endoplasmic reticulum stress response pathway. This is Cytochrome b5 reductase 4 (cyb5r4) from Danio rerio (Zebrafish).